A 254-amino-acid chain; its full sequence is 3-oxo-5-alpha-steroid 4-dehydrogenase 2 (254 aa).

A run of 4 helical transmembrane segments spans residues 8 to 28 (SPVL…LYVA), 72 to 92 (PLSL…LHYF), 146 to 166 (FSLG…SDYI), and 206 to 226 (LATW…FLGL).

Belongs to the steroid 5-alpha reductase family. Expressed in high levels in the prostate and many other androgen-sensitive tissues.

The protein localises to the microsome membrane. It is found in the endoplasmic reticulum membrane. The catalysed reaction is a 3-oxo-5alpha-steroid + NADP(+) = a 3-oxo-Delta(4)-steroid + NADPH + H(+). It catalyses the reaction 17beta-hydroxy-5alpha-androstan-3-one + NADP(+) = testosterone + NADPH + H(+). It carries out the reaction 5alpha-pregnane-3,20-dione + NADP(+) = progesterone + NADPH + H(+). Converts testosterone (T) into 5-alpha-dihydrotestosterone (DHT) and progesterone or corticosterone into their corresponding 5-alpha-3-oxosteroids. It plays a central role in sexual differentiation and androgen physiology. The protein is 3-oxo-5-alpha-steroid 4-dehydrogenase 2 (SRD5A2) of Homo sapiens (Human).